A 67-amino-acid chain; its full sequence is UPF0337 protein Atu4724 (67 aa).

It belongs to the UPF0337 (CsbD) family.

The sequence is that of UPF0337 protein Atu4724 from Agrobacterium fabrum (strain C58 / ATCC 33970) (Agrobacterium tumefaciens (strain C58)).